The chain runs to 185 residues: Ribosome-recycling factor (185 aa).

This sequence belongs to the RRF family.

The protein resides in the cytoplasm. Its function is as follows. Responsible for the release of ribosomes from messenger RNA at the termination of protein biosynthesis. May increase the efficiency of translation by recycling ribosomes from one round of translation to another. The protein is Ribosome-recycling factor of Mycolicibacterium vanbaalenii (strain DSM 7251 / JCM 13017 / BCRC 16820 / KCTC 9966 / NRRL B-24157 / PYR-1) (Mycobacterium vanbaalenii).